The following is a 289-amino-acid chain: METEASNESIEKSLPKRIALLIQYNGSGFCGWQRQKEGNSVQSILEEAVSSLDPFQPIKVVAAGRTDSGVHASGQVAHFDCSGFIPANRWAAALNGRLPKAIRVRYSALRPITWHACFSATYRRYRYTIYNGCKPNLFLSPWCWHRYQFRLDENLMNLALQGIKGFHDFTAFQRAGSNRPNALTTVEDVHLFRQGDLVSIDIQATGFLYGMVRLLVGQLVAVGEHRISVAEFERRWKLKLREEVREAAPPNGLSLIRVGYETMIFPENIAFDSFPFFSLSTSDPPPSPQ.

D67 functions as the Nucleophile in the catalytic mechanism. Y125 is a substrate binding site.

It belongs to the tRNA pseudouridine synthase TruA family. Homodimer.

It carries out the reaction uridine(38/39/40) in tRNA = pseudouridine(38/39/40) in tRNA. In terms of biological role, formation of pseudouridine at positions 38, 39 and 40 in the anticodon stem and loop of transfer RNAs. This Prochlorococcus marinus (strain MIT 9211) protein is tRNA pseudouridine synthase A.